An 834-amino-acid chain; its full sequence is Periplasmic nitrate reductase (834 aa).

A signal peptide (tat-type signal) is located at residues 1–29; sequence MSLTRRQFAKANAAAIAATVAGMPIASTA. Residues 41 to 97 enclose the 4Fe-4S Mo/W bis-MGD-type domain; that stretch reads LKWDKAPCRFCGTGCGVMVATRENRVVATHGDVKADVNRGINCVKGYFLSKIMYGTD. Residues C48, C51, C55, and C83 each contribute to the [4Fe-4S] cluster site. Mo-bis(molybdopterin guanine dinucleotide) is bound by residues K85, Q152, N177, C181, 214 to 221, 245 to 249, 264 to 266, M375, Q379, N485, 511 to 512, K534, D561, and 721 to 730; these read WGSNMAEM, STFEH, QTD, SD, and TGRVLEHWHT. F797 contacts substrate. 2 residues coordinate Mo-bis(molybdopterin guanine dinucleotide): N805 and K822.

Belongs to the prokaryotic molybdopterin-containing oxidoreductase family. NasA/NapA/NarB subfamily. In terms of assembly, component of the periplasmic nitrate reductase NapAB complex composed of NapA and NapB. [4Fe-4S] cluster serves as cofactor. Requires Mo-bis(molybdopterin guanine dinucleotide) as cofactor. Post-translationally, predicted to be exported by the Tat system. The position of the signal peptide cleavage has not been experimentally proven.

The protein resides in the periplasm. The enzyme catalyses 2 Fe(II)-[cytochrome] + nitrate + 2 H(+) = 2 Fe(III)-[cytochrome] + nitrite + H2O. Functionally, catalytic subunit of the periplasmic nitrate reductase complex NapAB. Receives electrons from NapB and catalyzes the reduction of nitrate to nitrite. The sequence is that of Periplasmic nitrate reductase from Stutzerimonas stutzeri (Pseudomonas stutzeri).